Reading from the N-terminus, the 162-residue chain is Disulfide bond formation protein B (162 aa).

Over 1–8 (MTPLFRKA) the chain is Cytoplasmic. A helical transmembrane segment spans residues 9–25 (VWLLFAVSVCAFAGSLA). At 26–43 (AQYVLGMEPCVLCISQRL) the chain is on the periplasmic side. An intrachain disulfide couples Cys-35 to Cys-38. Residues 44–60 (CVLATALCAAVVLACKP) traverse the membrane as a helical segment. The Cytoplasmic segment spans residues 61-67 (KGRVGGL). The chain crosses the membrane as a helical span at residues 68–85 (SGAVFISIPAVTGISVAA). Residues 86-141 (YQLWLQSLPPGAAPSCGAPWTFRLKGWPLFDWFEPVVRGFGNCAEPDYLLGVALPV) are Periplasmic-facing. Cys-101 and Cys-128 are oxidised to a cystine. Residues 142-160 (WSAAYFLAVVLTVWWAWAR) form a helical membrane-spanning segment. Over 161-162 (AK) the chain is Cytoplasmic.

It belongs to the DsbB family.

The protein resides in the cell inner membrane. In terms of biological role, required for disulfide bond formation in some periplasmic proteins. Acts by oxidizing the DsbA protein. The polypeptide is Disulfide bond formation protein B (Neisseria gonorrhoeae (strain ATCC 700825 / FA 1090)).